A 620-amino-acid chain; its full sequence is MSFDIAKYPTLALVDSTQELRLLPNESLPKLCDELRRYLLDSVSRSSGHFASGLGTVELTVALHYVYNTPFDQLIWDVGHQAYPHKILTGRRDKIGTIRQKGGLHPFPWRGESEYDVLSVGHSSTSISAGIGIAVAAEKEGKNRRTVCVIGDGAITAGMAFEAMNHAGDIRPDMLVVLNDNEMSISENVGALNNHLAQLLSGKLYSSLREGGKKVFSGVPPIKELLKRTEEHIKGMVVPGTLFEELGFNYIGPVDGHDVLGLITTLKNMRDLKGPQFLHIMTKKGRGYEPAEKDPITFHAVPKFDPSSGCLPKSSGGLPSYSKIFGDWLCETAAKDNKLMAITPAMREGSGMVEFSRKFPDRYFDVAIAEQHAVTFAAGLAIGGYKPIVAIYSTFLQRAYDQVLHDVAIQKLPVLFAIDRAGIVGADGQTHQGAFDLSYLRCIPEMVIMTPSDENECRQMLYTGYHYNDGPSAVRYPRGNAVGVELTPLEKLPIGKGIVKRRGEKLVILNFGTLMPETAKVAESLNATLVDMRFVKPLDEALILEMAASHEALVTVEENAIMGGAGSGVNEVLMAHRKPVPVLNIGLPDFFIPQGTQEEMRAELGLDAAGMEAKIKAWLA.

Residues histidine 80 and 121–123 (GHS) contribute to the thiamine diphosphate site. Mg(2+) is bound at residue aspartate 152. Thiamine diphosphate is bound by residues 153–154 (GA), asparagine 181, tyrosine 288, and glutamate 370. Residue asparagine 181 participates in Mg(2+) binding.

This sequence belongs to the transketolase family. DXPS subfamily. As to quaternary structure, homodimer. The cofactor is Mg(2+). Thiamine diphosphate is required as a cofactor.

It carries out the reaction D-glyceraldehyde 3-phosphate + pyruvate + H(+) = 1-deoxy-D-xylulose 5-phosphate + CO2. Its pathway is metabolic intermediate biosynthesis; 1-deoxy-D-xylulose 5-phosphate biosynthesis; 1-deoxy-D-xylulose 5-phosphate from D-glyceraldehyde 3-phosphate and pyruvate: step 1/1. Functionally, catalyzes the acyloin condensation reaction between C atoms 2 and 3 of pyruvate and glyceraldehyde 3-phosphate to yield 1-deoxy-D-xylulose-5-phosphate (DXP). The sequence is that of 1-deoxy-D-xylulose-5-phosphate synthase from Shigella flexneri.